An 818-amino-acid chain; its full sequence is H(+)/Cl(-) exchange transporter 3 (818 aa).

Residues 1–125 (MESEQLFHRG…WEMTKSLYDA (125 aa)) are Cytoplasmic-facing. 3 short sequence motifs (di-leucine internalization motif; mediates targeting to late endosome and lysosome membranes) span residues 28-29 (LL), 46-47 (LL), and 71-75 (LLDLL). A helical membrane pass occupies residues 126–163 (WSGWLVVTLTGLASGALAGLIDIAADWMTDLKEGICLS). An N-linked (GlcNAc...) asparagine glycan is attached at Asn-177. The chain crosses the membrane as a helical span at residues 209–232 (MNYIMYIFWALSFAFLAVSLVKVF). The Selectivity filter part_1 signature appears at 238–242 (GSGIP). Ser-239 lines the chloride pocket. The helical intramembrane region spans 241 to 248 (IPEIKTIL). 2 helical membrane passes run 258-276 (GKWT…VASG) and 282-301 (EGPL…YLFP). A Selectivity filter part_2 motif is present at residues 280-284 (GKEGP). 2 consecutive intramembrane regions (helical) follow at residues 313 to 325 (VLSA…VSVA) and 329 to 337 (PIGGVLFSL). The next 3 helical transmembrane spans lie at 349 to 367 (LWRS…RSIN), 391 to 416 (FPFI…AWCR), and 423 to 443 (FGKY…VIAF). Asn-451 and Asn-479 each carry an N-linked (GlcNAc...) asparagine glycan. The next 2 helical transmembrane spans lie at 500-520 (IWQL…TFGI) and 525-544 (GLFI…VGIA). A Selectivity filter part_3 motif is present at residues 525–529 (GLFIP). Phe-527 contacts chloride. 2 intramembrane regions (helical) span residues 572–586 (GLYA…LGGV) and 590–601 (TVSLVVIVFELT). Residues 602-605 (GGLE) constitute an intramembrane region (note=Loop between two helices). Residues 606–624 (YIVPLMAAVMTSKWVGDAF) form a helical membrane-spanning segment. Topologically, residues 625 to 818 (GREGIYEAHI…NQDPASIMFN (194 aa)) are cytoplasmic. Tyr-630 contributes to the chloride binding site. 2 consecutive CBS domains span residues 658–722 (MRPR…ARKK) and 755–812 (LDMS…NQDP). ATP is bound by residues 689–691 (YNG) and 796–799 (TKKD).

The protein belongs to the chloride channel (TC 2.A.49) family. ClC-3/CLCN3 subfamily. As to quaternary structure, monomer and homodimer. Forms heterodimers with CLCN4. Interacts with GOPC, PDZK1 and NHERF1/EBP50. Post-translationally, N-glycosylated. In terms of tissue distribution, expressed primarily in tissues derived from neuroectoderm. Within the brain, its expression is particularly evident in the hippocampus, olfactory cortex, and olfactory bulb. Highly expressed in aortic and coronary vascular smooth muscle cells, and aortic endothelial cells. Also expressed in tracheal and alveolar epithelial cells, and intima and media of the pulmonary vessels. Expressed in bronchus and colon (at protein level).

It is found in the early endosome membrane. The protein localises to the late endosome membrane. It localises to the lysosome membrane. The protein resides in the cell membrane. Its subcellular location is the golgi apparatus membrane. It is found in the cell projection. The protein localises to the ruffle membrane. Its function is as follows. Strongly outwardly rectifying, electrogenic H(+)/Cl(-)exchanger which mediates the exchange of chloride ions against protons. The CLC channel family contains both chloride channels and proton-coupled anion transporters that exchange chloride or another anion for protons. The presence of conserved gating glutamate residues is typical for family members that function as antiporters. Strongly outwardly rectifying, electrogenic H(+)/Cl(-)exchanger which mediates the exchange of chloride ions against protons. The chain is H(+)/Cl(-) exchange transporter 3 (CLCN3) from Homo sapiens (Human).